Reading from the N-terminus, the 333-residue chain is Ribosomal RNA small subunit methyltransferase H (333 aa).

S-adenosyl-L-methionine contacts are provided by residues 36–38 (GGY), aspartate 54, phenylalanine 81, aspartate 102, and glutamine 109.

The protein belongs to the methyltransferase superfamily. RsmH family.

It is found in the cytoplasm. It catalyses the reaction cytidine(1402) in 16S rRNA + S-adenosyl-L-methionine = N(4)-methylcytidine(1402) in 16S rRNA + S-adenosyl-L-homocysteine + H(+). Its function is as follows. Specifically methylates the N4 position of cytidine in position 1402 (C1402) of 16S rRNA. In Afipia carboxidovorans (strain ATCC 49405 / DSM 1227 / KCTC 32145 / OM5) (Oligotropha carboxidovorans), this protein is Ribosomal RNA small subunit methyltransferase H.